Reading from the N-terminus, the 251-residue chain is Hydroxyacylglutathione hydrolase (251 aa).

Zn(2+)-binding residues include H53, H55, D57, H58, H110, D127, and H165.

Belongs to the metallo-beta-lactamase superfamily. Glyoxalase II family. In terms of assembly, monomer. Zn(2+) is required as a cofactor.

The enzyme catalyses an S-(2-hydroxyacyl)glutathione + H2O = a 2-hydroxy carboxylate + glutathione + H(+). It functions in the pathway secondary metabolite metabolism; methylglyoxal degradation; (R)-lactate from methylglyoxal: step 2/2. Functionally, thiolesterase that catalyzes the hydrolysis of S-D-lactoyl-glutathione to form glutathione and D-lactic acid. The sequence is that of Hydroxyacylglutathione hydrolase from Shigella boydii serotype 18 (strain CDC 3083-94 / BS512).